Reading from the N-terminus, the 277-residue chain is Large ribosomal subunit protein uL2 (277 aa).

Residues 219–277 (TVRGSVMNPNDHPHGGGEGRSPIGHPSPRTPWGKPALGYKTRKNKKYSDRFIVKRRHDK) are disordered.

The protein belongs to the universal ribosomal protein uL2 family. Part of the 50S ribosomal subunit. Forms a bridge to the 30S subunit in the 70S ribosome.

One of the primary rRNA binding proteins. Required for association of the 30S and 50S subunits to form the 70S ribosome, for tRNA binding and peptide bond formation. It has been suggested to have peptidyltransferase activity; this is somewhat controversial. Makes several contacts with the 16S rRNA in the 70S ribosome. The sequence is that of Large ribosomal subunit protein uL2 from Clostridium botulinum (strain Okra / Type B1).